Here is a 195-residue protein sequence, read N- to C-terminus: Transmembrane protein 126A (195 aa).

Over 1 to 33 (MENHKSNNKENITIVDISRKINQLPEAERNLLE) the chain is Mitochondrial matrix. A helical transmembrane segment spans residues 34–54 (NGSVYVGLNAALCGLIANSLF). Residues 55–56 (RR) are Mitochondrial intermembrane-facing. The helical transmembrane segment at 57–77 (ILNVTKARIAAGLPMAGIPFL) threads the bilayer. The Mitochondrial matrix segment spans residues 78–110 (TTDLTYRCFVSFPLNTGDLDCETCTITRSGLTG). The helical transmembrane segment at 111 to 131 (LVIGGLYPVFLAIPVNGGLAA) threads the bilayer. Residues 132–158 (RYQSALLPHKGNILSYWIRTSKPVFRK) lie on the Mitochondrial intermembrane side of the membrane. A helical transmembrane segment spans residues 159-175 (MLFPILLQTMFSAYLGS). The Mitochondrial matrix segment spans residues 176–195 (EQYKLLIKALQLSEPGKEIH).

The protein belongs to the TMEM126 family. As to quaternary structure, interacts with OXA1L; promoting cotranslational quality control in mitochondria. Strongly expressed in brain, cerebellum, skeletal muscle, testis. High expression also found in fetal brain, fetal retinal pigmentary epithelium, and fetal retina. Highly expressed in retinal ganglion cells.

It is found in the mitochondrion inner membrane. Protein required for the cotranslational protein quality control in the inner membrane of the mitochondria. Associates with newly synthesized polypeptides and may act as a chaperone that cooperates with OXA1L for the insertion of newly synthesized mitochondrial proteins into the inner membrane. Required for the assembly of the ND4 module of mitochondrial complex I. The polypeptide is Transmembrane protein 126A (Homo sapiens (Human)).